A 192-amino-acid polypeptide reads, in one-letter code: Zinc finger CCHC domain-containing protein 10 (192 aa).

The segment at 43–60 adopts a CCHC-type zinc-finger fold; the sequence is VRCQKCLEFGHWTYECTG. A disordered region spans residues 89-192; that stretch reads QSIGETNVER…DEPPKKKKKK (104 aa). Low complexity-rich tracts occupy residues 109 to 136 and 144 to 179; these read TSSS…SSSS and SSSS…STDS.

The polypeptide is Zinc finger CCHC domain-containing protein 10 (ZCCHC10) (Homo sapiens (Human)).